We begin with the raw amino-acid sequence, 112 residues long: Large ribosomal subunit protein eL30 (112 aa).

This sequence belongs to the eukaryotic ribosomal protein eL30 family.

The chain is Large ribosomal subunit protein eL30 (RPL30) from Lupinus luteus (European yellow lupine).